The sequence spans 201 residues: Large ribosomal subunit protein mL61 (201 aa).

The tract at residues 87–118 is disordered; sequence RDDKDAKPSSTPFPTSSADGSSPAPKPAQGER. Over residues 94–106 the composition is skewed to polar residues; that stretch reads PSSTPFPTSSADG.

Belongs to the mitochondrion-specific ribosomal protein mL61 family. As to quaternary structure, component of the mitochondrial large ribosomal subunit (mt-LSU). Mature N.crassa 74S mitochondrial ribosomes consist of a small (37S) and a large (54S) subunit. The 37S small subunit contains a 16S ribosomal RNA (16S mt-rRNA) and 32 different proteins. The 54S large subunit contains a 23S rRNA (23S mt-rRNA) and 42 different proteins.

It is found in the mitochondrion. Its function is as follows. Component of the mitochondrial ribosome (mitoribosome), a dedicated translation machinery responsible for the synthesis of mitochondrial genome-encoded proteins, including at least some of the essential transmembrane subunits of the mitochondrial respiratory chain. The mitoribosomes are attached to the mitochondrial inner membrane and translation products are cotranslationally integrated into the membrane. This chain is Large ribosomal subunit protein mL61 (mrp49), found in Neurospora crassa (strain ATCC 24698 / 74-OR23-1A / CBS 708.71 / DSM 1257 / FGSC 987).